The following is a 255-amino-acid chain: Probable transcriptional regulator ycf27 (255 aa).

The Response regulatory domain maps to 9–122; sequence KILIADDESS…ELEARIRCVL (114 aa). At Asp-58 the chain carries 4-aspartylphosphate. Residues 78 to 96 constitute a DNA-binding region (H-T-H motif); the sequence is DIPIIMLTALGDVTDRITG. Residues 137 to 238 constitute a DNA-binding region (ompR/PhoB-type); sequence SGIINIGFLK…SRGTGYLFQR (102 aa).

It localises to the plastid. It is found in the chloroplast. In terms of biological role, probable promoter-specific protein mediating the interaction between DNA and RNA polymerase. The polypeptide is Probable transcriptional regulator ycf27 (ycf27) (Galdieria sulphuraria (Red alga)).